The primary structure comprises 421 residues: Ankyrin repeat and SOCS box protein 6 (421 aa).

ANK repeat units follow at residues 67 to 97 (EGVS…NLNF), 102 to 131 (TYYT…DINR), 136 to 166 (HESS…DVNA), 170 to 205 (HGKT…DVKA), 226 to 255 (GGDK…DPSE), and 260 to 289 (ESLT…AYNC). The SOCS box domain occupies 360-415 (ALHFSLRQLESYPPPLKHLCRVAIRLYLQPWPVDVKVKALPLPDRLKWYLLSEHSG).

This sequence belongs to the ankyrin SOCS box (ASB) family. In terms of assembly, binds APS. Identified in a complex with ELOB and ELOC. Interacts with CUL5 and RNF7. Interacts with SQSTM1.

It localises to the cytoplasm. Its pathway is protein modification; protein ubiquitination. Probable substrate-recognition component of a SCF-like ECS (Elongin-Cullin-SOCS-box protein) E3 ubiquitin-protein ligase complex which mediates the ubiquitination and subsequent proteasomal degradation of target proteins. May play a role in the regulation of cell proliferation and autophagy by promoting the ubiquitination and degradation of SQSTM1. The sequence is that of Ankyrin repeat and SOCS box protein 6 (ASB6) from Pongo abelii (Sumatran orangutan).